A 1777-amino-acid polypeptide reads, in one-letter code: FERM and PDZ domain-containing protein 3 (1777 aa).

Residues 21–98 (QVTVHRDPIY…FIVLTVLHTH (78 aa)) form the PDZ domain. One can recognise an FERM domain in the interval 147 to 461 (NVLKVFLENG…GYCRLLLDSR (315 aa)). 7 disordered regions span residues 491–520 (TGGH…TPPP), 555–574 (ETRP…QGYE), 622–697 (QLGP…GRHL), 832–871 (SLGR…QGER), 1014–1216 (SAPE…PFRL), 1309–1346 (RPQA…LSSP), and 1732–1765 (QQQQ…ATVM). The segment covering 502–511 (YVGSVGTSPR) has biased composition (polar residues). The segment covering 555–564 (ETRPRTKSDP) has biased composition (basic and acidic residues). The segment covering 649-659 (SEEEEEEEDET) has biased composition (acidic residues). Polar residues-rich tracts occupy residues 840–850 (PSLQPIATGQS), 1015–1035 (APET…SSPR), 1046–1056 (HLSQQEDSLPV), and 1094–1111 (LQKQ…QLES). Positions 1134–1168 (QSPSCQSRSHSPSCQPHGHSPSSQSRGQSPSCQPR) are enriched in low complexity. Over residues 1172 to 1202 (PLRSQAASRQVSTMPSRKLETTLNGAHSTSE) the composition is skewed to polar residues. Positions 1732–1751 (QQQQQQQQQQQQVAAAAGAA) are enriched in low complexity.

The chain is FERM and PDZ domain-containing protein 3 from Homo sapiens (Human).